A 70-amino-acid polypeptide reads, in one-letter code: MKVYCLLVVLLVGLVSQTQGQLDKKCNMACTLDYRPVCGSDGKTYPNRCALTSTACESQQSITVLHDGEC.

The N-terminal stretch at 1 to 20 is a signal peptide; that stretch reads MKVYCLLVVLLVGLVSQTQG. One can recognise a Kazal-like domain in the interval 21–70; that stretch reads QLDKKCNMACTLDYRPVCGSDGKTYPNRCALTSTACESQQSITVLHDGEC. 3 disulfide bridges follow: Cys-26/Cys-56, Cys-30/Cys-49, and Cys-38/Cys-70.

The protein belongs to the conopeptide P-like superfamily. As to expression, expressed by the venom duct.

The protein localises to the secreted. Functionally, acts as a neurotoxin by inhibiting an ion channel. May also act as a serine protease inhibitor, since it possess the kazal serine protease inhibitor signature. This chain is Turripeptide Pal9.2, found in Polystira albida (White giant-turris).